Here is a 425-residue protein sequence, read N- to C-terminus: Enolase (425 aa).

Gln162 is a binding site for (2R)-2-phosphoglycerate. The active-site Proton donor is Glu204. Residues Asp241, Glu284, and Asp311 each contribute to the Mg(2+) site. (2R)-2-phosphoglycerate-binding residues include Lys336, Arg365, Ser366, and Lys387. Lys336 acts as the Proton acceptor in catalysis.

Belongs to the enolase family. Requires Mg(2+) as cofactor.

It is found in the cytoplasm. The protein resides in the secreted. The protein localises to the cell surface. It carries out the reaction (2R)-2-phosphoglycerate = phosphoenolpyruvate + H2O. It participates in carbohydrate degradation; glycolysis; pyruvate from D-glyceraldehyde 3-phosphate: step 4/5. Functionally, catalyzes the reversible conversion of 2-phosphoglycerate (2-PG) into phosphoenolpyruvate (PEP). It is essential for the degradation of carbohydrates via glycolysis. This is Enolase from Brucella melitensis biotype 2 (strain ATCC 23457).